A 319-amino-acid chain; its full sequence is Aspartate carbamoyltransferase catalytic subunit (319 aa).

Carbamoyl phosphate contacts are provided by R57 and T58. K85 contributes to the L-aspartate binding site. R107, H140, and Q143 together coordinate carbamoyl phosphate. L-aspartate-binding residues include R173 and R227. 2 residues coordinate carbamoyl phosphate: G268 and P269.

The protein belongs to the aspartate/ornithine carbamoyltransferase superfamily. ATCase family. Heterododecamer (2C3:3R2) of six catalytic PyrB chains organized as two trimers (C3), and six regulatory PyrI chains organized as three dimers (R2).

The catalysed reaction is carbamoyl phosphate + L-aspartate = N-carbamoyl-L-aspartate + phosphate + H(+). It functions in the pathway pyrimidine metabolism; UMP biosynthesis via de novo pathway; (S)-dihydroorotate from bicarbonate: step 2/3. Functionally, catalyzes the condensation of carbamoyl phosphate and aspartate to form carbamoyl aspartate and inorganic phosphate, the committed step in the de novo pyrimidine nucleotide biosynthesis pathway. In Mycobacterium tuberculosis (strain ATCC 25177 / H37Ra), this protein is Aspartate carbamoyltransferase catalytic subunit.